A 141-amino-acid chain; its full sequence is Succinate dehydrogenase [ubiquinone] cytochrome b small subunit 2 (141 aa).

The transit peptide at 1–24 directs the protein to the mitochondrion; that stretch reads MSLIRCTTSKALKFRQLLKMAART. Over 25 to 44 the chain is Mitochondrial matrix; the sequence is SVTTPVSREPFSIEDHSLHF. The helical transmembrane segment at 45–63 threads the bilayer; sequence KIERYWAAGMIPLIPTAYF. The Mitochondrial intermembrane segment spans residues 64 to 68; sequence IHTPA. A helical transmembrane segment spans residues 69–89; it reads MDAVLTVAIVLHVHWGIAGVV. Histidine 80 contacts heme b. Residues 90–104 are Mitochondrial matrix-facing; the sequence is SDYARPFVIGDTLAR. Tyrosine 92 contributes to the a ubiquinone binding site. A helical membrane pass occupies residues 105-126; it reads VARASVYIITVILLASLLHFNN. Over 127-141 the chain is Mitochondrial intermembrane; the sequence is SDVGLTKAFEMVWSL.

It belongs to the CybS family. As to quaternary structure, component of the mitochondrial electron transport chain complex II composed of four subunits: a flavoprotein (Fp), an iron-sulfur protein (Ip), and a large cytochrome b (CybL) subunit and a small cytochrome b (CybS) subunit. There are 2 developmental stage-specific forms of complex II which have the Ip and CybL subunits in common. Complex II from the free-living larvae (aerobic environment) acts as a succinate dehydrogenase and is composed of the common subunit Ip and CybL and the stage specific subunits FpL and CybSL. Complex II from parasitic larvae and adults (anaerobic environment) acts as a fumarate reductase and is composed of the common subunit Ip and CybL and the stage specific subunits FpA and CybSA. The cofactor is heme b.

It is found in the mitochondrion inner membrane. The protein operates within carbohydrate metabolism; tricarboxylic acid cycle; fumarate from succinate (eukaryal route): step 1/1. Membrane-bound small subunit (CybS) of the mitochondrial electron transport chain complex II, which together with the membrane-bound large subunit (CybL), anchor the catalytic subunits to the inner mitochondria membrane. During the free-living egg-larvae stages, which occur in an aerobic environment, complex II acts as a succinate dehydrogenase by transferring electrons from succinate to ubiquinone. The sequence is that of Succinate dehydrogenase [ubiquinone] cytochrome b small subunit 2 from Ascaris suum (Pig roundworm).